The following is a 164-amino-acid chain: Large ribosomal subunit protein uL11 (164 aa).

The protein belongs to the universal ribosomal protein uL11 family. In terms of assembly, part of the ribosomal stalk of the 50S ribosomal subunit. Interacts with L10 and the large rRNA to form the base of the stalk. L10 forms an elongated spine to which L12 dimers bind in a sequential fashion forming a multimeric L10(L12)X complex.

In terms of biological role, forms part of the ribosomal stalk which helps the ribosome interact with GTP-bound translation factors. This Pyrococcus abyssi (strain GE5 / Orsay) protein is Large ribosomal subunit protein uL11.